The sequence spans 143 residues: MNEQKTNDLILQTATKLVSFIILLFSFYLFLSGHNAPGGGFVGGLITSSSIVLLLLAYDLKTVRSLLPVNFIYVAGAGLLLAVLTGVGSFVFGAPFLTHTFGYFQLPILGKTELATATIFDLGVYLVVVGITMTIIQTIGEEE.

4 helical membrane passes run 9-31, 36-58, 71-93, and 117-139; these read LILQ…YLFL, APGG…LLAY, FIYV…FVFG, and ATIF…IQTI.

Belongs to the CPA3 antiporters (TC 2.A.63) subunit B family. As to quaternary structure, forms a heterooligomeric complex that consists of seven subunits: MrpA, MrpB, MrpC, MrpD, MrpE, MrpF and MrpG.

It localises to the cell membrane. Its function is as follows. Mrp complex is a Na(+)/H(+) antiporter that is considered to be the major Na(+) excretion system in B.subtilis. Has a major role in Na(+) resistance and a minor role in Na(+)- and K(+)-dependent pH homeostasis as compared to TetB. MrpA may be the actual Na(+)/H(+) antiporter, although the six other Mrp proteins are all required for Na(+)/H(+) antiport activity and Na(+) resistance. MrpA is required for initiation of sporulation when external Na(+) concentration increases. Also transports Li(+) but not K(+), Ca(2+) or Mg(2+). The chain is Na(+)/H(+) antiporter subunit B (mrpB) from Bacillus subtilis (strain 168).